The following is a 292-amino-acid chain: 4-hydroxy-tetrahydrodipicolinate synthase (292 aa).

Pyruvate is bound at residue T45. Y133 functions as the Proton donor/acceptor in the catalytic mechanism. The active-site Schiff-base intermediate with substrate is K161. Residue I203 participates in pyruvate binding.

It belongs to the DapA family. Homotetramer; dimer of dimers.

Its subcellular location is the cytoplasm. It carries out the reaction L-aspartate 4-semialdehyde + pyruvate = (2S,4S)-4-hydroxy-2,3,4,5-tetrahydrodipicolinate + H2O + H(+). It participates in amino-acid biosynthesis; L-lysine biosynthesis via DAP pathway; (S)-tetrahydrodipicolinate from L-aspartate: step 3/4. Functionally, catalyzes the condensation of (S)-aspartate-beta-semialdehyde [(S)-ASA] and pyruvate to 4-hydroxy-tetrahydrodipicolinate (HTPA). The polypeptide is 4-hydroxy-tetrahydrodipicolinate synthase (Shigella boydii serotype 18 (strain CDC 3083-94 / BS512)).